A 197-amino-acid polypeptide reads, in one-letter code: Cytochrome c-L (197 aa).

Residues M1–A25 form the signal peptide. Residues C90, C93, and H94 each coordinate heme c.

Post-translationally, binds 1 heme c group covalently per subunit.

It is found in the periplasm. Functionally, electron acceptor for MDH. Acts in methanol oxidation. This is Cytochrome c-L (moxG) from Methylorubrum extorquens (strain ATCC 14718 / DSM 1338 / JCM 2805 / NCIMB 9133 / AM1) (Methylobacterium extorquens).